We begin with the raw amino-acid sequence, 121 residues long: Ribonuclease P protein component (121 aa).

This sequence belongs to the RnpA family. In terms of assembly, consists of a catalytic RNA component (M1 or rnpB) and a protein subunit.

The enzyme catalyses Endonucleolytic cleavage of RNA, removing 5'-extranucleotides from tRNA precursor.. In terms of biological role, RNaseP catalyzes the removal of the 5'-leader sequence from pre-tRNA to produce the mature 5'-terminus. It can also cleave other RNA substrates such as 4.5S RNA. The protein component plays an auxiliary but essential role in vivo by binding to the 5'-leader sequence and broadening the substrate specificity of the ribozyme. This is Ribonuclease P protein component from Erythrobacter litoralis (strain HTCC2594).